Reading from the N-terminus, the 1388-residue chain is Retrotransposon Gag-like protein 9 (1388 aa).

5 disordered regions span residues alanine 491–serine 511, threonine 769–serine 790, glycine 895–serine 918, threonine 1100–valine 1138, and alanine 1336–lysine 1388. Polar residues predominate over residues glycine 1103–methionine 1123. Positions tyrosine 1359 to leucine 1374 are enriched in basic and acidic residues.

In Homo sapiens (Human), this protein is Retrotransposon Gag-like protein 9.